The chain runs to 445 residues: Probable glycine dehydrogenase (decarboxylating) subunit 1 (445 aa).

It belongs to the GcvP family. N-terminal subunit subfamily. In terms of assembly, the glycine cleavage system is composed of four proteins: P, T, L and H. In this organism, the P 'protein' is a heterodimer of two subunits.

The catalysed reaction is N(6)-[(R)-lipoyl]-L-lysyl-[glycine-cleavage complex H protein] + glycine + H(+) = N(6)-[(R)-S(8)-aminomethyldihydrolipoyl]-L-lysyl-[glycine-cleavage complex H protein] + CO2. Functionally, the glycine cleavage system catalyzes the degradation of glycine. The P protein binds the alpha-amino group of glycine through its pyridoxal phosphate cofactor; CO(2) is released and the remaining methylamine moiety is then transferred to the lipoamide cofactor of the H protein. This chain is Probable glycine dehydrogenase (decarboxylating) subunit 1, found in Chlorobium chlorochromatii (strain CaD3).